The following is a 215-amino-acid chain: Ribonuclease T (215 aa).

One can recognise an Exonuclease domain in the interval 20-194 (VVIDVETAGF…YDTERTAVLF (175 aa)). Residues Asp23, Glu25, His181, and Asp186 each contribute to the Mg(2+) site. His181 serves as the catalytic Proton donor/acceptor.

It belongs to the RNase T family. Homodimer. It depends on Mg(2+) as a cofactor.

Functionally, trims short 3' overhangs of a variety of RNA species, leaving a one or two nucleotide 3' overhang. Responsible for the end-turnover of tRNA: specifically removes the terminal AMP residue from uncharged tRNA (tRNA-C-C-A). Also appears to be involved in tRNA biosynthesis, especially in strains lacking other exoribonucleases. In terms of biological role, a general regulator of small RNAs (sRNA), contributes to their degradation. Upon overexpression suppresses sRNA-mediated RhyB-silencing of multiple RNA targets; overexpression leads to nearly complete loss of RhyB sRNA. The chain is Ribonuclease T from Escherichia coli (strain K12).